Consider the following 603-residue polypeptide: Prosaposin receptor GPR37 (603 aa).

A signal peptide spans 1–26; sequence MPAPGAPLSRTSRLLLLLLFKVSVSA. The Extracellular segment spans residues 27–255; it reads ALSFVPEPRN…QESYGAYAVM (229 aa). Residue asparagine 36 is glycosylated (N-linked (GlcNAc...) asparagine). Residues 39-232 form a disordered region; that stretch reads CLGESCSPLI…GGPRRGNSTN (194 aa). Composition is skewed to basic and acidic residues over residues 51-79, 145-158, and 165-175; these read RSRDAGGPRNSARDALRVHVPREKLEAEV, TSERGEMSSKRDEI, and HSVKTEPEPRD. Asparagine 212 and asparagine 229 each carry an N-linked (GlcNAc...) asparagine glycan. The helical transmembrane segment at 256-276 threads the bilayer; that stretch reads CLSVVIFGTGIIGNLAVMCIV. Over 277–289 the chain is Cytoplasmic; sequence CHNYYMRSISNSL. The helical transmembrane segment at 290–310 threads the bilayer; it reads LANLAFWDFLIIFFCLPLVIF. The Extracellular segment spans residues 311-325; sequence HELTKKWLLEDFSCK. An intrachain disulfide couples cysteine 324 to cysteine 409. A helical transmembrane segment spans residues 326-346; sequence IVPYIEVASLGVTTFTLCALC. The Cytoplasmic segment spans residues 347–369; it reads IDRFRAATNVQMYYEMIENCSST. A helical membrane pass occupies residues 370–390; sequence TAKLAVIWVGALLLALPEVVL. Topologically, residues 391–433 are extracellular; the sequence is RQLSKEDLGFSGQAPAERCVIKISPDLPDTIYVLALTYDGARL. Residues 434-454 traverse the membrane as a helical segment; the sequence is WWYFGCYFCLPTLFTITCSLV. Residues 455 to 483 lie on the Cytoplasmic side of the membrane; the sequence is TARKIRKAEKASTRGNKRQIHLESQMNCT. Residues 484 to 504 traverse the membrane as a helical segment; it reads VVALTILYGFCIIPENICNIV. Residues 505-521 are Extracellular-facing; sequence TAYMATGVSQQTMDLLN. Residues 522-542 form a helical membrane-spanning segment; it reads IISQFLLFFKSCVTPVLLFCL. At 543 to 603 the chain is on the cytoplasmic side; it reads CRPFSRAFME…STFASVGTHC (61 aa).

This sequence belongs to the G-protein coupled receptor 1 family. In terms of assembly, forms a complex with PRKN, STUB1 and HSP70. The amount of STUB1 in the complex increases during ER stress. STUB1 promotes the dissociation of HSP70 from PRKN, thus facilitating PRKN-mediated GPR37 ubiquitination. Interacts with PACRG. In terms of processing, the N-terminus is cleaved by ADAM10 metalloproteinase; mediating limited proteolysis leading to the release of receptor ectodomain by shedding. In addition, cleaved by FURIN between Arg-53 and Asp-54. Post-translationally, ubiquitinated by PRKN in the presence of UBE2E1 and UBE2L3 in the endoplasmic reticulum. The unfolded form is specifically ubiquitinated by SYVN1, which promotes its proteasomal degradation and prevents neuronal cell death. As to expression, highly expressed in the brain. High levels of expression were seen in fiber tracts such as the corpus callosum, anterior commissure, fornix, internal capsule, cerebral peduncles, and stria terminalis. Additionally, moderate levels of expression were seen in the pyramidal tracts and cerebellar peduncles, as well as in the spinal tract of the trigeminal nerve and the spinal fasciculi.

It localises to the cell projection. Its subcellular location is the dendrite. It is found in the synapse. The protein resides in the cell membrane. The protein localises to the endoplasmic reticulum membrane. In terms of biological role, G-protein-coupled receptor that plays a role in several physiological pathways such as resolution of inflammatory pain and oligodendrocyte differentiation. Acts as a receptor for several ligands including prosaposin, osteocalcin or neuroprotectin D1. Ligand binding induces endocytosis, followed by an ERK phosphorylation cascade. Acts as a receptor for osteocalcin (OCN) to regulate oligodendrocyte differentiation and central nervous system myelination. Mechanistically, plays a negative role in oligodendrocyte differentiation and myelination during development via activation of the ERK1/2 signaling pathway. Therefore, regulates the stability of myelin or resistance of myelin itself to demyelination. Upon activation by neuroprotectin D1 (NPD1), promotes the activation of phagocytosis in macrophages as well as the shift in cytokine release toward an anti-inflammatory profile, and thus helps to reverse inflammatory pain. In addition, the increased macrophage phagocytosis mediates protection against sepsis upon pathogen infection. Additionally, extracellular vesicles derived from efferocyte express prosaposin, which binds to macrophage GPR37 to increase expression of the efferocytosis receptor TIM4 via an ERK-AP1-dependent signaling axis, leading to increased macrophage efferocytosis efficiency and accelerated resolution of inflammation. May also act as a maturation factor of LRP6, protecting LRP6 from the endoplasmic reticulum (ER)-associated protein degradation (ERAD) and thereby promoting the Wnt/beta-catenin signaling pathway. This is Prosaposin receptor GPR37 (Gpr37) from Rattus norvegicus (Rat).